The following is a 37-amino-acid chain: Photosystem II reaction center protein M (37 aa).

A helical transmembrane segment spans residues 7–27 (GFIAVLMFLAIPTAFLLIPYV).

It belongs to the PsbM family. PSII is composed of 1 copy each of membrane proteins PsbA, PsbB, PsbC, PsbD, PsbE, PsbF, PsbH, PsbI, PsbJ, PsbK, PsbL, PsbM, PsbT, PsbX, PsbY, PsbZ, Psb30/Ycf12, at least 3 peripheral proteins of the oxygen-evolving complex and a large number of cofactors. It forms dimeric complexes.

The protein resides in the plastid. It localises to the chloroplast thylakoid membrane. One of the components of the core complex of photosystem II (PSII). PSII is a light-driven water:plastoquinone oxidoreductase that uses light energy to abstract electrons from H(2)O, generating O(2) and a proton gradient subsequently used for ATP formation. It consists of a core antenna complex that captures photons, and an electron transfer chain that converts photonic excitation into a charge separation. This subunit is found at the monomer-monomer interface. This is Photosystem II reaction center protein M from Pinus koraiensis (Korean pine).